A 261-amino-acid polypeptide reads, in one-letter code: Imidazole glycerol phosphate synthase subunit HisF (261 aa).

Catalysis depends on residues D16 and D135.

Belongs to the HisA/HisF family. Heterodimer of HisH and HisF.

It is found in the cytoplasm. It catalyses the reaction 5-[(5-phospho-1-deoxy-D-ribulos-1-ylimino)methylamino]-1-(5-phospho-beta-D-ribosyl)imidazole-4-carboxamide + L-glutamine = D-erythro-1-(imidazol-4-yl)glycerol 3-phosphate + 5-amino-1-(5-phospho-beta-D-ribosyl)imidazole-4-carboxamide + L-glutamate + H(+). Its pathway is amino-acid biosynthesis; L-histidine biosynthesis; L-histidine from 5-phospho-alpha-D-ribose 1-diphosphate: step 5/9. Functionally, IGPS catalyzes the conversion of PRFAR and glutamine to IGP, AICAR and glutamate. The HisF subunit catalyzes the cyclization activity that produces IGP and AICAR from PRFAR using the ammonia provided by the HisH subunit. The sequence is that of Imidazole glycerol phosphate synthase subunit HisF from Mycolicibacterium gilvum (strain PYR-GCK) (Mycobacterium gilvum (strain PYR-GCK)).